The chain runs to 204 residues: Large ribosomal subunit protein mL67 (204 aa).

The protein belongs to the mitochondrion-specific ribosomal protein mL67 family.

Its subcellular location is the nucleus. The protein localises to the mitochondrion. Transcription factor involved in regulation of RNA polymerase II-dependent transcription. Also involved in regulation of mitochondrial DNA recombination, maintenance and repair, and generation of homoplasmic cells. This Yarrowia lipolytica (strain CLIB 122 / E 150) (Yeast) protein is Large ribosomal subunit protein mL67 (MHR1).